The primary structure comprises 55 residues: MPQLNPAPWFMIFMFTWAIFLTILPPKVMAHTFPNEPSPQGMTTPKTAPWNWPWH.

The helical transmembrane segment at 4–24 threads the bilayer; that stretch reads LNPAPWFMIFMFTWAIFLTIL. Residues 34 to 55 form a disordered region; that stretch reads PNEPSPQGMTTPKTAPWNWPWH.

It belongs to the ATPase protein 8 family. As to quaternary structure, component of the ATP synthase complex composed at least of ATP5F1A/subunit alpha, ATP5F1B/subunit beta, ATP5MC1/subunit c (homooctomer), MT-ATP6/subunit a, MT-ATP8/subunit 8, ATP5ME/subunit e, ATP5MF/subunit f, ATP5MG/subunit g, ATP5MK/subunit k, ATP5MJ/subunit j, ATP5F1C/subunit gamma, ATP5F1D/subunit delta, ATP5F1E/subunit epsilon, ATP5PF/subunit F6, ATP5PB/subunit b, ATP5PD/subunit d, ATP5PO/subunit OSCP. ATP synthase complex consists of a soluble F(1) head domain (subunits alpha(3) and beta(3)) - the catalytic core - and a membrane F(0) domain - the membrane proton channel (subunits c, a, 8, e, f, g, k and j). These two domains are linked by a central stalk (subunits gamma, delta, and epsilon) rotating inside the F1 region and a stationary peripheral stalk (subunits F6, b, d, and OSCP).

Its subcellular location is the mitochondrion membrane. In terms of biological role, subunit 8, of the mitochondrial membrane ATP synthase complex (F(1)F(0) ATP synthase or Complex V) that produces ATP from ADP in the presence of a proton gradient across the membrane which is generated by electron transport complexes of the respiratory chain. ATP synthase complex consist of a soluble F(1) head domain - the catalytic core - and a membrane F(1) domain - the membrane proton channel. These two domains are linked by a central stalk rotating inside the F(1) region and a stationary peripheral stalk. During catalysis, ATP synthesis in the catalytic domain of F(1) is coupled via a rotary mechanism of the central stalk subunits to proton translocation. In vivo, can only synthesize ATP although its ATP hydrolase activity can be activated artificially in vitro. Part of the complex F(0) domain. The sequence is that of ATP synthase F(0) complex subunit 8 from Gadus morhua (Atlantic cod).